A 1349-amino-acid chain; its full sequence is DNA-directed RNA polymerase subunit beta' (1349 aa).

Zn(2+) contacts are provided by cysteine 219, cysteine 293, cysteine 300, and cysteine 303. A disordered region spans residues 1298-1349; the sequence is LDSPTLGESGFGSRRAERSVLDDEDELIADEVVDDDDFEEEEEDDEDDFDDE. A compositionally biased stretch (acidic residues) spans 1319–1349; sequence DDEDELIADEVVDDDDFEEEEEDDEDDFDDE.

This sequence belongs to the RNA polymerase beta' chain family. RpoC2 subfamily. As to quaternary structure, in cyanobacteria the RNAP catalytic core is composed of 2 alpha, 1 beta, 1 beta', 1 gamma and 1 omega subunit. When a sigma factor is associated with the core the holoenzyme is formed, which can initiate transcription. It depends on Zn(2+) as a cofactor.

It catalyses the reaction RNA(n) + a ribonucleoside 5'-triphosphate = RNA(n+1) + diphosphate. DNA-dependent RNA polymerase catalyzes the transcription of DNA into RNA using the four ribonucleoside triphosphates as substrates. This chain is DNA-directed RNA polymerase subunit beta', found in Nostoc punctiforme (strain ATCC 29133 / PCC 73102).